The chain runs to 470 residues: GDP-Man:Man(3)GlcNAc(2)-PP-Dol alpha-1,2-mannosyltransferase (470 aa).

Residues 1–15 (MSDTVISLISHSITT) are Lumenal-facing. The helical transmembrane segment at 16 to 36 (VFYLVPLIIALIIPFSLYSGF) threads the bilayer. Over 37–131 (RRKSKTVAFF…HYKHCTMLFQ (95 aa)) the chain is Cytoplasmic. Positions 132–152 (ALAGLILALEAWFRMVPAVFI) form an intramembrane region, helical. Residues 153–378 (DSMGYPLSLP…ISIHTMHNEH (226 aa)) lie on the Cytoplasmic side of the membrane. The segment at residues 379-399 (FGISVVEAMAASTIILSNDSG) is an intramembrane region (helical). At 400-470 (GPRMDIVKDY…HWNKEIEKVL (71 aa)) the chain is on the cytoplasmic side.

This sequence belongs to the glycosyltransferase group 1 family. Glycosyltransferase 4 subfamily.

It localises to the endoplasmic reticulum membrane. It carries out the reaction an alpha-D-Man-(1-&gt;3)-[alpha-D-Man-(1-&gt;6)]-beta-D-Man-(1-&gt;4)-beta-D-GlcNAc-(1-&gt;4)-alpha-D-GlcNAc-diphospho-di-trans,poly-cis-dolichol + 2 GDP-alpha-D-mannose = an alpha-D-Man-(1-&gt;2)-alpha-D-Man-(1-&gt;2)-alpha-D-Man-(1-&gt;3)-[alpha-D-Man-(1-&gt;6)]-beta-D-Man-(1-&gt;4)-beta-D-GlcNAc-(1-&gt;4)-alpha-D-GlcNAc-diphospho-di-trans,poly-cis-dolichol + 2 GDP + 2 H(+). The protein operates within protein modification; protein glycosylation. Functionally, GDP-Man:Man(3)GlcNAc(2)-PP-Dol alpha-1,2-mannosyltransferase that operates in the biosynthetic pathway of dolichol-linked oligosaccharides, the glycan precursors employed in protein asparagine (N)-glycosylation. The assembly of dolichol-linked oligosaccharides begins on the cytosolic side of the endoplasmic reticulum membrane and finishes in its lumen. The sequential addition of sugars to dolichol pyrophosphate produces dolichol-linked oligosaccharides containing fourteen sugars, including two GlcNAcs, nine mannoses and three glucoses. Once assembled, the oligosaccharide is transferred from the lipid to nascent proteins by oligosaccharyltransferases. Catalyzes, on the cytoplasmic face of the endoplasmic reticulum, the addition of the fourth and fifth mannose residues to the dolichol-linked oligosaccharide chain, to produce Man(5)GlcNAc(2)-PP-dolichol core oligosaccharide. Man(5)GlcNAc(2)-PP-dolichol is a substrate for ALG3, the following enzyme in the biosynthetic pathway. This chain is GDP-Man:Man(3)GlcNAc(2)-PP-Dol alpha-1,2-mannosyltransferase, found in Caenorhabditis elegans.